The following is a 325-amino-acid chain: Tagatose 1,6-diphosphate aldolase 1 (325 aa).

It belongs to the aldolase LacD family.

The enzyme catalyses D-tagatofuranose 1,6-bisphosphate = D-glyceraldehyde 3-phosphate + dihydroxyacetone phosphate. The protein operates within carbohydrate metabolism; D-tagatose 6-phosphate degradation; D-glyceraldehyde 3-phosphate and glycerone phosphate from D-tagatose 6-phosphate: step 2/2. The polypeptide is Tagatose 1,6-diphosphate aldolase 1 (lacD1) (Streptococcus pyogenes serotype M3 (strain ATCC BAA-595 / MGAS315)).